Reading from the N-terminus, the 117-residue chain is S-adenosylmethionine decarboxylase proenzyme (117 aa).

S63 functions as the Schiff-base intermediate with substrate; via pyruvic acid in the catalytic mechanism. Pyruvic acid (Ser); by autocatalysis is present on S63. Catalysis depends on H68, which acts as the Proton acceptor; for processing activity. Catalysis depends on C83, which acts as the Proton donor; for catalytic activity.

It belongs to the prokaryotic AdoMetDC family. Type 1 subfamily. As to quaternary structure, heterotetramer of two alpha and two beta chains arranged as a dimer of alpha/beta heterodimers. The cofactor is pyruvate. Post-translationally, is synthesized initially as an inactive proenzyme. Formation of the active enzyme involves a self-maturation process in which the active site pyruvoyl group is generated from an internal serine residue via an autocatalytic post-translational modification. Two non-identical subunits are generated from the proenzyme in this reaction, and the pyruvate is formed at the N-terminus of the alpha chain, which is derived from the carboxyl end of the proenzyme. The post-translation cleavage follows an unusual pathway, termed non-hydrolytic serinolysis, in which the side chain hydroxyl group of the serine supplies its oxygen atom to form the C-terminus of the beta chain, while the remainder of the serine residue undergoes an oxidative deamination to produce ammonia and the pyruvoyl group blocking the N-terminus of the alpha chain.

The enzyme catalyses S-adenosyl-L-methionine + H(+) = S-adenosyl 3-(methylsulfanyl)propylamine + CO2. It functions in the pathway amine and polyamine biosynthesis; S-adenosylmethioninamine biosynthesis; S-adenosylmethioninamine from S-adenosyl-L-methionine: step 1/1. Catalyzes the decarboxylation of S-adenosylmethionine to S-adenosylmethioninamine (dcAdoMet), the propylamine donor required for the synthesis of the polyamines spermine and spermidine from the diamine putrescine. The protein is S-adenosylmethionine decarboxylase proenzyme of Methanococcus aeolicus (strain ATCC BAA-1280 / DSM 17508 / OCM 812 / Nankai-3).